A 115-amino-acid polypeptide reads, in one-letter code: MVSRKAVAALLVVHVAAMLASQTEAFVPIFTYGELQRMQEKERNKGQKKSLSVWQRSGEEGPVDPAEPIREEENEMIKLTAPLEIGMRMNSRQLEKYPATLEGLLSEMLPQHAAK.

A signal peptide spans 1-25; that stretch reads MVSRKAVAALLVVHVAAMLASQTEA. The tract at residues 39-72 is disordered; it reads QEKERNKGQKKSLSVWQRSGEEGPVDPAEPIREE.

Belongs to the motilin family.

The protein localises to the secreted. Its function is as follows. Plays an important role in the regulation of interdigestive gastrointestinal motility and indirectly causes rhythmic contraction of duodenal and colonic smooth muscle. This is Promotilin (MLN) from Homo sapiens (Human).